Reading from the N-terminus, the 101-residue chain is uncharacterized protein (101 aa).

A helical membrane pass occupies residues 72-94; that stretch reads ILCPSFLNYSFINIYCFGPYTMV.

Its subcellular location is the membrane. This is an uncharacterized protein from Schizosaccharomyces pombe (strain 972 / ATCC 24843) (Fission yeast).